Reading from the N-terminus, the 157-residue chain is Endoribonuclease YbeY (157 aa).

Zn(2+)-binding residues include histidine 114, histidine 118, and histidine 124.

Belongs to the endoribonuclease YbeY family. Zn(2+) serves as cofactor.

The protein resides in the cytoplasm. Single strand-specific metallo-endoribonuclease involved in late-stage 70S ribosome quality control and in maturation of the 3' terminus of the 16S rRNA. The chain is Endoribonuclease YbeY from Salmonella paratyphi A (strain AKU_12601).